The primary structure comprises 453 residues: MQAIAKNDIKTGTVVDLTHEGHGVVKIDRFPIFIPQALINEQIEYKIIKVKKNFAIGKLLNINTRSENRVAPPCIYYERCGGCQLQHLSYEAQLEMKKEQVINLFQRKAHFDNSKINDTVGMTDPWRYRNKSQIPVGKNEQNEVIMGFYRQRSHDIIDMESCLIQDSQHQEVMNEVKSILKDLNVSIYQEQLKKGLMRHLVVRTGYHTDEMMIIFVTNGKKWPQKNAVVEKILDAFPNVTSIKQNINDSHSNVIMGRQSITLYGKDTIIDQLTDSTFKISDQSFYQINSEQTEKLYNKAIEYAQLTGNEVVLDTYCGIGTIGLYMAPHAKHVYGVEVVPSSIEDAQQNATINQCNNTTFVCGKAEEVILQWKAQGIKPDVVMVDPPRKGCDETFIQTLLTLEPKRIVYISCNPATQQRDALLLAEKYQLEEVTPVDMFPQTTHVETVALFNLK.

[4Fe-4S] cluster is bound by residues C74, C80, C83, and C162. Residues Q286, Y315, E336, and D384 each coordinate S-adenosyl-L-methionine. The Nucleophile role is filled by C411.

This sequence belongs to the class I-like SAM-binding methyltransferase superfamily. RNA M5U methyltransferase family.

This is an uncharacterized protein from Staphylococcus aureus (strain Mu50 / ATCC 700699).